A 117-amino-acid chain; its full sequence is Immunoglobulin kappa variable 1D-12 (117 aa).

Residues 1-22 (MDMMVPAQLLGLLLLWFPGSRC) form the signal peptide. Positions 23–45 (DIQMTQSPSSVSASVGDRVTITC) are framework-1. One can recognise an Ig-like domain in the interval 24 to 117 (IQMTQSPSSV…YYCQQANSFP (94 aa)). C45 and C110 are oxidised to a cystine. Residues 46 to 56 (RASQGISSWLA) are complementarity-determining-1. The tract at residues 57 to 71 (WYQQKPGKAPKLLIY) is framework-2. Positions 72–78 (AASSLQS) are complementarity-determining-2. The segment at 79–110 (GVPSRFSGSGSGTDFTLTISSLQPEDFATYYC) is framework-3. A complementarity-determining-3 region spans residues 111–117 (QQANSFP).

Immunoglobulins are composed of two identical heavy chains and two identical light chains; disulfide-linked.

It is found in the secreted. The protein localises to the cell membrane. Functionally, v region of the variable domain of immunoglobulin light chains that participates in the antigen recognition. Immunoglobulins, also known as antibodies, are membrane-bound or secreted glycoproteins produced by B lymphocytes. In the recognition phase of humoral immunity, the membrane-bound immunoglobulins serve as receptors which, upon binding of a specific antigen, trigger the clonal expansion and differentiation of B lymphocytes into immunoglobulins-secreting plasma cells. Secreted immunoglobulins mediate the effector phase of humoral immunity, which results in the elimination of bound antigens. The antigen binding site is formed by the variable domain of one heavy chain, together with that of its associated light chain. Thus, each immunoglobulin has two antigen binding sites with remarkable affinity for a particular antigen. The variable domains are assembled by a process called V-(D)-J rearrangement and can then be subjected to somatic hypermutations which, after exposure to antigen and selection, allow affinity maturation for a particular antigen. The chain is Immunoglobulin kappa variable 1D-12 from Homo sapiens (Human).